Reading from the N-terminus, the 417-residue chain is D-amino acid dehydrogenase (417 aa).

3-17 (VIVIGSGVIGLTSAW) provides a ligand contact to FAD.

The protein belongs to the DadA oxidoreductase family. The cofactor is FAD.

The enzyme catalyses a D-alpha-amino acid + A + H2O = a 2-oxocarboxylate + AH2 + NH4(+). It functions in the pathway amino-acid degradation; D-alanine degradation; NH(3) and pyruvate from D-alanine: step 1/1. Oxidative deamination of D-amino acids. This Vibrio atlanticus (strain LGP32) (Vibrio splendidus (strain Mel32)) protein is D-amino acid dehydrogenase.